We begin with the raw amino-acid sequence, 187 residues long: Preprocaerulein clone PXC202 (187 aa).

Residues 1-9 constitute a propeptide that is removed on maturation; sequence NDERRFADG. The tract at residues 1–21 is disordered; sequence NDERRFADGQQDYTGWMDFGR. Residue Tyr-13 is modified to Sulfotyrosine. At Phe-19 the chain carries Phenylalanine amide. A propeptide spanning residues 23 to 73 is cleaved from the precursor; sequence DDEDDVNERDVRGFGSFLGKALKAALKIGANALGGSPQQREANDERRFADG. Tyr-77 is modified (sulfotyrosine). At Phe-83 the chain carries Phenylalanine amide. Residues 87 to 137 constitute a propeptide that is removed on maturation; that stretch reads DDEDDVNERDVRGFGSFLGKALKAALKIGANALGGSLQQREVNDERRFADG. Residue Tyr-141 is modified to Sulfotyrosine. At Phe-147 the chain carries Phenylalanine amide. A propeptide spanning residues 151–152 is cleaved from the precursor; it reads DG. Position 156 is a sulfotyrosine (Tyr-156). Phe-162 carries the post-translational modification Phenylalanine amide. Positions 166 to 187 are excised as a propeptide; sequence DDEDDVHERDVRGFGSFLGKAL.

This sequence belongs to the gastrin/cholecystokinin family. In terms of tissue distribution, expressed by the skin glands.

Its subcellular location is the secreted. In terms of biological role, the pharmacological activities of caerulein are quite similar to the physiological activities of gastrin and related peptides. The protein is Preprocaerulein clone PXC202 of Xenopus laevis (African clawed frog).